The primary structure comprises 1009 residues: Chitin synthase 2 (1009 aa).

Composition is skewed to polar residues over residues Met-1–His-12 and Glu-34–Gln-62. Disordered regions lie at residues Met-1 to Gln-62 and Asp-175 to Ser-234. Over residues Glu-192–Thr-202 the composition is skewed to acidic residues. 7 helical membrane passes run Trp-647–Thr-667, Phe-682–Val-702, Ile-722–Ser-742, Ile-757–Val-777, Leu-804–Phe-823, Val-930–Phe-950, and Ala-967–Ile-987.

It belongs to the chitin synthase family.

Its subcellular location is the cell membrane. It carries out the reaction [(1-&gt;4)-N-acetyl-beta-D-glucosaminyl](n) + UDP-N-acetyl-alpha-D-glucosamine = [(1-&gt;4)-N-acetyl-beta-D-glucosaminyl](n+1) + UDP + H(+). Functionally, polymerizes chitin, a structural polymer of the cell wall and septum, by transferring the sugar moiety of UDP-GlcNAc to the non-reducing end of the growing chitin polymer. The protein is Chitin synthase 2 (CHS2) of Candida albicans (Yeast).